The sequence spans 631 residues: Methanol dehydrogenase [cytochrome c] subunit 1 (631 aa).

An N-terminal signal peptide occupies residues 1-32 (MNRNTPKARGASSLAMAVAMGLAVLTTAPATA). C135 and C136 are disulfide-bonded. E209 and N293 together coordinate Ca(2+). The active-site Proton acceptor is D335. The cysteines at positions 418 and 447 are disulfide-linked.

This sequence belongs to the bacterial PQQ dehydrogenase family. As to quaternary structure, heterotetramer composed of 2 alpha and 2 beta subunits. Pyrroloquinoline quinone is required as a cofactor. The cofactor is Ca(2+).

Its subcellular location is the periplasm. The enzyme catalyses 2 Fe(III)-[cytochrome cL] + a primary alcohol = 2 Fe(II)-[cytochrome cL] + an aldehyde + 2 H(+). Catalyzes the oxidation of primary alcohols including methanol. The chain is Methanol dehydrogenase [cytochrome c] subunit 1 (moxF) from Paracoccus denitrificans.